The primary structure comprises 130 residues: Small ribosomal subunit protein uS9 (130 aa).

It belongs to the universal ribosomal protein uS9 family.

This chain is Small ribosomal subunit protein uS9, found in Pseudomonas paraeruginosa (strain DSM 24068 / PA7) (Pseudomonas aeruginosa (strain PA7)).